The following is a 602-amino-acid chain: Phosphoenolpyruvate carboxykinase [GTP] (602 aa).

Substrate is bound by residues Arg89 and 211 to 213 (YAG). 2 residues coordinate Mn(2+): Lys220 and His239. Substrate is bound at residue Ser260. 261 to 266 (GSGKTS) serves as a coordination point for GTP. The active site involves Ser262. Asp277 contributes to the Mn(2+) binding site. 367–369 (NAR) serves as a coordination point for substrate. Residues Arg369 and Arg400 each contribute to the GTP site.

This sequence belongs to the phosphoenolpyruvate carboxykinase [GTP] family. Mn(2+) is required as a cofactor.

The protein localises to the cytoplasm. It carries out the reaction oxaloacetate + GTP = phosphoenolpyruvate + GDP + CO2. Its pathway is carbohydrate biosynthesis; gluconeogenesis. Functionally, catalyzes the conversion of oxaloacetate (OAA) to phosphoenolpyruvate (PEP), the rate-limiting step in the metabolic pathway that produces glucose from lactate and other precursors derived from the citric acid cycle. This Sulfurisphaera tokodaii (strain DSM 16993 / JCM 10545 / NBRC 100140 / 7) (Sulfolobus tokodaii) protein is Phosphoenolpyruvate carboxykinase [GTP].